Here is a 548-residue protein sequence, read N- to C-terminus: Probable malate:quinone oxidoreductase (548 aa).

The disordered stretch occupies residues 520–548 (YDRPQAADSTPKPQLKPQPVQKEVADIAL). The span at 530–541 (PKPQLKPQPVQK) shows a compositional bias: low complexity.

Belongs to the MQO family. The cofactor is FAD.

It carries out the reaction (S)-malate + a quinone = a quinol + oxaloacetate. The protein operates within carbohydrate metabolism; tricarboxylic acid cycle; oxaloacetate from (S)-malate (quinone route): step 1/1. The protein is Probable malate:quinone oxidoreductase of Shigella dysenteriae serotype 1 (strain Sd197).